Here is a 65-residue protein sequence, read N- to C-terminus: Large ribosomal subunit protein uL29 (65 aa).

This sequence belongs to the universal ribosomal protein uL29 family.

The polypeptide is Large ribosomal subunit protein uL29 (Acidovorax ebreus (strain TPSY) (Diaphorobacter sp. (strain TPSY))).